The primary structure comprises 534 residues: NAD(P)H-quinone oxidoreductase chain 4 (534 aa).

A run of 14 helical transmembrane segments spans residues 12–32, 44–64, 96–116, 120–140, 144–164, 176–196, 220–240, 251–271, 285–305, 314–334, 340–360, 384–404, 425–445, and 472–492; these read FPWLSASILFPIGSALVIPFF, FALSIALITFLITVGSYINGF, MPLILLTSFITALAVLAAWPV, PKLFFFLILVMDGGQIAVFAV, LLFFLTWELELIPVYLLLAIW, FIIYTAGSSIFILLAALAMGF, ILCYVGLLIAFGVKLPIVPLH, TAPVHMLLAGILLKMGGYALL, FAPLLIVLGVVNIIYAALTSF, IAYSSISHMGFVLIGIGSFSS, AMLQMVSHGLIGASLFFLVGA, FALWTACSLASLALPGMSGFV, VVMASLAAIGVILTPIYLLSM, and VYIIACLLLPIIGIGLYPRLV.

Belongs to the complex I subunit 4 family.

It is found in the cellular thylakoid membrane. It carries out the reaction a plastoquinone + NADH + (n+1) H(+)(in) = a plastoquinol + NAD(+) + n H(+)(out). The catalysed reaction is a plastoquinone + NADPH + (n+1) H(+)(in) = a plastoquinol + NADP(+) + n H(+)(out). NDH-1 shuttles electrons from NAD(P)H, via FMN and iron-sulfur (Fe-S) centers, to quinones in the respiratory chain. The immediate electron acceptor for the enzyme in this species is believed to be plastoquinone. Couples the redox reaction to proton translocation (for every two electrons transferred, four hydrogen ions are translocated across the cytoplasmic membrane), and thus conserves the redox energy in a proton gradient. The protein is NAD(P)H-quinone oxidoreductase chain 4 of Prochlorococcus marinus (strain MIT 9215).